A 702-amino-acid chain; its full sequence is Ribosomal RNA large subunit methyltransferase K/L (702 aa).

In terms of domain architecture, THUMP spans 43–154 (LIYQSLMWSR…KETASIALDL (112 aa)).

The protein belongs to the methyltransferase superfamily. RlmKL family.

Its subcellular location is the cytoplasm. The enzyme catalyses guanosine(2445) in 23S rRNA + S-adenosyl-L-methionine = N(2)-methylguanosine(2445) in 23S rRNA + S-adenosyl-L-homocysteine + H(+). It catalyses the reaction guanosine(2069) in 23S rRNA + S-adenosyl-L-methionine = N(2)-methylguanosine(2069) in 23S rRNA + S-adenosyl-L-homocysteine + H(+). In terms of biological role, specifically methylates the guanine in position 2445 (m2G2445) and the guanine in position 2069 (m7G2069) of 23S rRNA. This Salmonella agona (strain SL483) protein is Ribosomal RNA large subunit methyltransferase K/L.